A 274-amino-acid chain; its full sequence is Oxidoreductase BOA17 (274 aa).

NADP(+)-binding residues include Leu14, Thr32, Asp57, Asn84, and Lys117. Catalysis depends on proton donor residues Ser135 and Tyr149. Positions 149, 153, 182, and 184 each coordinate NADP(+). Residue Lys153 is the Lowers pKa of active site Tyr of the active site.

This sequence belongs to the short-chain dehydrogenases/reductases (SDR) family.

The protein operates within polyketide biosynthesis. Oxidoreductase; part of the gene cluster B that mediates the biosynthesis of botcinic acid and its botcinin derivatives, acetate-derived polyketides that contribute to virulence when combined with the sesquiterpene botrydial. Botcinic acid and its derivatives have been shown to induce chlorosis and necrosis during host plant infection, but also have antifungal activities. Two polyketide synthases, BOA6 and BOA9, are involved in the biosynthesis of botcinins. BOA6 mediates the formation of the per-methylated tetraketide core by condensation of four units of malonyl-CoA with one unit of acetyl-CoA, which would be methylated in activated methylene groups to yield a bicyclic acid intermediate that could then either be converted to botrylactone derivatives or lose the starter acetate unit through a retro-Claisen type C-C bond cleavage to yield botcinin derivatives. The second polyketide synthase, BOA9, is probably required for the biosynthesis of the tetraketide side chain of botcinins. The methyltransferase (MT) domain within BOA6 is probably responsible for the incorporation of four methyl groups. The trans-enoyl reductase BOA5 might take over the enoyl reductase function of BOA6 that misses an ER domain. The monooxygenases BOA2, BOA3 and BOA4 might be involved in further hydroxylations at C4, C5 and C8, whereas BOA7, close to BOA9, could potentially be involved in the hydroxylation at C4 in the side chain of botcinins. The protein is Oxidoreductase BOA17 of Botryotinia fuckeliana (strain B05.10) (Noble rot fungus).